Here is a 208-residue protein sequence, read N- to C-terminus: Small ribosomal subunit protein uS4 (208 aa).

An S4 RNA-binding domain is found at 98 to 163; it reads QRLDNVVYRM…NPQITRAIEL (66 aa).

The protein belongs to the universal ribosomal protein uS4 family. As to quaternary structure, part of the 30S ribosomal subunit. Contacts protein S5. The interaction surface between S4 and S5 is involved in control of translational fidelity.

Functionally, one of the primary rRNA binding proteins, it binds directly to 16S rRNA where it nucleates assembly of the body of the 30S subunit. Its function is as follows. With S5 and S12 plays an important role in translational accuracy. This chain is Small ribosomal subunit protein uS4, found in Campylobacter jejuni subsp. jejuni serotype O:6 (strain 81116 / NCTC 11828).